We begin with the raw amino-acid sequence, 552 residues long: MAEKQKHDGRVKIGHYVLGDTLGVGTFGKVKIGEHQLTGHKVAVKILNRQKIRSLDVVGKIKREIQNLKLFRHPHIIKLYQVISTPTDFFMVMEYVSGGELFDYICKHGRVEEMEARRLFQQILSAVDYCHRHMVVHRDLKPENVLLDAHMNAKIADFGLSNMMSDGEFLRTSCGSPNYAAPEVISGRLYAGPEVDIWSCGVILYALLCGTLPFDDEHVPTLFKKIRGGVFYIPEYLNRSVATLLMHMLQVDPLKRATIKDIREHEWFKQDLPSYLFPEDPSYDANVIDDEAVKEVCEKFECTESEVMNSLYSGDPQDQLAVAYHLIIDNRRIMNQASEFYLASSPPSGSFMDDSAMHIPPGLKPHPERMPPLIADSPKARCPLDALNTTKPKSLAVKKAKWHLGIRSQSKPYDIMAEVYRAMKQLDFEWKVVNAYHLRVRRKNPVTGNYVKMSLQLYLVDNRSYLLDFKSIDDEVVEQRSGSSTPQRSCSAAGLHRPRSSFDSTTAESHSLSGSLTGSLTGSTLSSVSPRLGSHTMDFFEMCASLITTLAR.

A Protein kinase domain is found at 16–268 (YVLGDTLGVG…IKDIREHEWF (253 aa)). Residues 22 to 30 (LGVGTFGKV) and Lys45 contribute to the ATP site. Asp139 (proton acceptor) is an active-site residue. Phosphothreonine; by LKB1 and CaMKK2 is present on Thr172. Thr258 carries the post-translational modification Phosphothreonine. The interval 291–376 (EAVKEVCEKF…PERMPPLIAD (86 aa)) is AIS. Ser377 carries the phosphoserine modification. A disordered region spans residues 477-521 (VEQRSGSSTPQRSCSAAGLHRPRSSFDSTTAESHSLSGSLTGSLT). A compositionally biased stretch (polar residues) spans 480 to 490 (RSGSSTPQRSC). Ser491 bears the Phosphoserine mark. Residues 501–510 (SFDSTTAESH) show a composition bias toward polar residues. The span at 511–521 (SLSGSLTGSLT) shows a compositional bias: low complexity.

It belongs to the protein kinase superfamily. CAMK Ser/Thr protein kinase family. SNF1 subfamily. In terms of assembly, AMPK is a heterotrimer of an alpha catalytic subunit (PRKAA1 or PRKAA2), a beta (PRKAB1 or PRKAB2) and a gamma non-catalytic subunits (PRKAG1, PRKAG2 or PRKAG3). Interacts with FNIP1 and FNIP2. Associates with internalized insulin receptor/INSR complexes on Golgi/endosomal membranes; PRKAA2/AMPK2 together with ATIC and HACD3/PTPLAD1 is proposed to be part of a signaling network regulating INSR autophosphorylation and endocytosis. Interacts with ARF6. The phosphorylated form at Thr-172 mediated by CamKK2 interacts with ACSS2. Mg(2+) is required as a cofactor. Post-translationally, ubiquitinated. Phosphorylated at Thr-172 by STK11/LKB1 in complex with STE20-related adapter-alpha (STRADA) pseudo kinase and CAB39. Also phosphorylated at Thr-172 by CAMKK2; triggered by a rise in intracellular calcium ions, without detectable changes in the AMP/ATP ratio. CAMKK1 can also phosphorylate Thr-172, but at much lower level. Dephosphorylated by protein phosphatase 2A and 2C (PP2A and PP2C). Phosphorylated by ULK1; leading to negatively regulate AMPK activity and suggesting the existence of a regulatory feedback loop between ULK1 and AMPK. Dephosphorylated by PPM1A and PPM1B at Thr-172 (mediated by STK11/LKB1).

It localises to the cytoplasm. The protein resides in the nucleus. It carries out the reaction L-seryl-[protein] + ATP = O-phospho-L-seryl-[protein] + ADP + H(+). It catalyses the reaction L-threonyl-[protein] + ATP = O-phospho-L-threonyl-[protein] + ADP + H(+). The enzyme catalyses L-seryl-[acetyl-CoA carboxylase] + ATP = O-phospho-L-seryl-[acetyl-CoA carboxylase] + ADP + H(+). The catalysed reaction is L-seryl-[3-hydroxy-3-methylglutaryl-coenzyme A reductase] + ATP = O-phospho-L-seryl-[3-hydroxy-3-methylglutaryl-coenzyme A reductase] + ADP + H(+). With respect to regulation, activated by phosphorylation on Thr-172. Binding of AMP to non-catalytic gamma subunit (PRKAG1, PRKAG2 or PRKAG3) results in allosteric activation, inducing phosphorylation on Thr-172. AMP-binding to gamma subunit also sustains activity by preventing dephosphorylation of Thr-172. ADP also stimulates Thr-172 phosphorylation, without stimulating already phosphorylated AMPK. ATP promotes dephosphorylation of Thr-172, rendering the enzyme inactive. Under physiological conditions AMPK mainly exists in its inactive form in complex with ATP, which is much more abundant than AMP. AMPK is activated by antihyperglycemic drug metformin, a drug prescribed to patients with type 2 diabetes: in vivo, metformin seems to mainly inhibit liver gluconeogenesis. However, metformin can be used to activate AMPK in muscle and other cells in culture or ex vivo. Selectively inhibited by compound C (6-[4-(2-Piperidin-1-yl-ethoxy)-phenyl)]-3-pyridin-4-yl-pyyrazolo[1,5-a] pyrimidine. Activated by resveratrol, a natural polyphenol present in red wine, and S17834, a synthetic polyphenol. Salicylate/aspirin directly activates kinase activity, primarily by inhibiting Thr-172 dephosphorylation. Catalytic subunit of AMP-activated protein kinase (AMPK), an energy sensor protein kinase that plays a key role in regulating cellular energy metabolism. In response to reduction of intracellular ATP levels, AMPK activates energy-producing pathways and inhibits energy-consuming processes: inhibits protein, carbohydrate and lipid biosynthesis, as well as cell growth and proliferation. AMPK acts via direct phosphorylation of metabolic enzymes, and by longer-term effects via phosphorylation of transcription regulators. Regulates lipid synthesis by phosphorylating and inactivating lipid metabolic enzymes such as ACACA, ACACB, GYS1, HMGCR and LIPE; regulates fatty acid and cholesterol synthesis by phosphorylating acetyl-CoA carboxylase (ACACA and ACACB) and hormone-sensitive lipase (LIPE) enzymes, respectively. Promotes lipolysis of lipid droplets by mediating phosphorylation of isoform 1 of CHKA (CHKalpha2). Regulates insulin-signaling and glycolysis by phosphorylating IRS1, PFKFB2 and PFKFB3. Involved in insulin receptor/INSR internalization. AMPK stimulates glucose uptake in muscle by increasing the translocation of the glucose transporter SLC2A4/GLUT4 to the plasma membrane, possibly by mediating phosphorylation of TBC1D4/AS160. Regulates transcription and chromatin structure by phosphorylating transcription regulators involved in energy metabolism such as CRTC2/TORC2, FOXO3, histone H2B, HDAC5, MEF2C, MLXIPL/ChREBP, EP300, HNF4A, p53/TP53, SREBF1, SREBF2 and PPARGC1A. Acts as a key regulator of glucose homeostasis in liver by phosphorylating CRTC2/TORC2, leading to CRTC2/TORC2 sequestration in the cytoplasm. In response to stress, phosphorylates 'Ser-36' of histone H2B (H2BS36ph), leading to promote transcription. Acts as a key regulator of cell growth and proliferation by phosphorylating FNIP1, TSC2, RPTOR, WDR24 and ATG1/ULK1: in response to nutrient limitation, negatively regulates the mTORC1 complex by phosphorylating RPTOR component of the mTORC1 complex and by phosphorylating and activating TSC2. Also phosphorylates and inhibits GATOR2 subunit WDR24 in response to nutrient limitation, leading to suppress glucose-mediated mTORC1 activation. In response to energetic stress, phosphorylates FNIP1, inactivating the non-canonical mTORC1 signaling, thereby promoting nuclear translocation of TFEB and TFE3, and inducing transcription of lysosomal or autophagy genes. In response to nutrient limitation, promotes autophagy by phosphorylating and activating ATG1/ULK1. In that process, it also activates WDR45/WIPI4. Phosphorylates CASP6, thereby preventing its autoprocessing and subsequent activation. AMPK also acts as a regulator of circadian rhythm by mediating phosphorylation of CRY1, leading to destabilize it. May regulate the Wnt signaling pathway by phosphorylating CTNNB1, leading to stabilize it. Also acts as a regulator of cellular polarity by remodeling the actin cytoskeleton; probably by indirectly activating myosin. Also phosphorylates CFTR, EEF2K, KLC1, NOS3 and SLC12A1. Plays an important role in the differential regulation of pro-autophagy (composed of PIK3C3, BECN1, PIK3R4 and UVRAG or ATG14) and non-autophagy (composed of PIK3C3, BECN1 and PIK3R4) complexes, in response to glucose starvation. Can inhibit the non-autophagy complex by phosphorylating PIK3C3 and can activate the pro-autophagy complex by phosphorylating BECN1. Upon glucose starvation, promotes ARF6 activation in a kinase-independent manner leading to cell migration. Upon glucose deprivation mediates the phosphorylation of ACSS2 at 'Ser-659', which exposes the nuclear localization signal of ACSS2, required for its interaction with KPNA1 and nuclear translocation. Upon stress, regulates mitochondrial fragmentation through phosphorylation of MTFR1L. This is 5'-AMP-activated protein kinase catalytic subunit alpha-2 from Homo sapiens (Human).